The following is a 226-amino-acid chain: 7-cyano-7-deazaguanine synthase (226 aa).

8-18 serves as a coordination point for ATP; sequence LSGGLDSTTVL. Zn(2+) is bound by residues cysteine 190, cysteine 198, cysteine 201, and cysteine 204.

The protein belongs to the QueC family. Homodimer. Zn(2+) serves as cofactor.

The enzyme catalyses 7-carboxy-7-deazaguanine + NH4(+) + ATP = 7-cyano-7-deazaguanine + ADP + phosphate + H2O + H(+). It functions in the pathway purine metabolism; 7-cyano-7-deazaguanine biosynthesis. Catalyzes the ATP-dependent conversion of 7-carboxy-7-deazaguanine (CDG) to 7-cyano-7-deazaguanine (preQ(0)). This Clostridium kluyveri (strain ATCC 8527 / DSM 555 / NBRC 12016 / NCIMB 10680 / K1) protein is 7-cyano-7-deazaguanine synthase.